Consider the following 333-residue polypeptide: Ribosomal RNA small subunit methyltransferase H (333 aa).

S-adenosyl-L-methionine contacts are provided by residues 39–41 (GGY), D57, F84, D101, and Q108.

Belongs to the methyltransferase superfamily. RsmH family.

It is found in the cytoplasm. The catalysed reaction is cytidine(1402) in 16S rRNA + S-adenosyl-L-methionine = N(4)-methylcytidine(1402) in 16S rRNA + S-adenosyl-L-homocysteine + H(+). Its function is as follows. Specifically methylates the N4 position of cytidine in position 1402 (C1402) of 16S rRNA. The polypeptide is Ribosomal RNA small subunit methyltransferase H (Dinoroseobacter shibae (strain DSM 16493 / NCIMB 14021 / DFL 12)).